The primary structure comprises 482 residues: 7-deoxyloganetic acid glucosyltransferase (482 aa).

Histidine 22 (proton acceptor) is an active-site residue. Histidine 22 is a binding site for an anthocyanidin. Aspartate 127 acts as the Charge relay in catalysis. The UDP-alpha-D-glucose site is built by threonine 149, alanine 362, glutamine 364, histidine 379, tryptophan 382, asparagine 383, serine 384, and glutamate 387. An an anthocyanidin-binding site is contributed by alanine 402. Residues aspartate 403 and glutamine 404 each coordinate UDP-alpha-D-glucose.

The protein belongs to the UDP-glycosyltransferase family. Expressed in leaves, roots and stems. Lower levels of expression in flowers. Preferentially expressed in internal phloem parenchyma cells.

It catalyses the reaction 7-deoxyloganetate + UDP-alpha-D-glucose = 7-deoxyloganate + UDP + H(+). Functionally, iridoid glucosyltransferase acting exclusively on 7-deoxyloganetic acid. No activity with 7-deoxyloganetin. Catalyzes the fourth to last step in secologanin biosynthesis. The protein is 7-deoxyloganetic acid glucosyltransferase (UGT709C2) of Catharanthus roseus (Madagascar periwinkle).